A 294-amino-acid polypeptide reads, in one-letter code: Syntaxin-19 (294 aa).

Residues 209–271 (LSEIEQRHKE…NNTKEKFGLA (63 aa)) enclose the t-SNARE coiled-coil homology domain.

It belongs to the syntaxin family. Interacts with EGFR.

Its subcellular location is the cell membrane. It localises to the cytoplasm. Its function is as follows. Plays a role in endosomal trafficking of the epidermal growth factor receptor (EGFR). In Pongo abelii (Sumatran orangutan), this protein is Syntaxin-19 (STX19).